A 144-amino-acid chain; its full sequence is INO80 complex subunit 5 (144 aa).

The segment at 1 to 58 is disordered; that stretch reads MAAQKKQGERVLPARSTRKRRQLPDMLYYDERTDSYVTPQERSLSEANAQTRPAPNTI. Residues 35–58 are compositionally biased toward polar residues; the sequence is SYVTPQERSLSEANAQTRPAPNTI.

Component of the INO80 chromatin remodeling complex.

It localises to the nucleus. In terms of biological role, component of the INO80 complex which remodels chromatin by shifting nucleosomes and is involved in DNA repair. The chain is INO80 complex subunit 5 (iec5) from Schizosaccharomyces pombe (strain 972 / ATCC 24843) (Fission yeast).